The primary structure comprises 336 residues: Dihydroorotate dehydrogenase (quinone) (336 aa).

FMN contacts are provided by residues 62–66 (AGLEK) and Thr86. Lys66 contacts substrate. 111-115 (NRMGF) lines the substrate pocket. Residues Asn139 and Asn172 each contribute to the FMN site. Substrate is bound at residue Asn172. Residue Ser175 is the Nucleophile of the active site. Asn177 is a substrate binding site. The FMN site is built by Lys217 and Thr245. Residue 246 to 247 (NT) participates in substrate binding. Residues Gly268, Gly297, and 318–319 (YS) contribute to the FMN site.

The protein belongs to the dihydroorotate dehydrogenase family. Type 2 subfamily. As to quaternary structure, monomer. Requires FMN as cofactor.

It localises to the cell membrane. It carries out the reaction (S)-dihydroorotate + a quinone = orotate + a quinol. The protein operates within pyrimidine metabolism; UMP biosynthesis via de novo pathway; orotate from (S)-dihydroorotate (quinone route): step 1/1. Functionally, catalyzes the conversion of dihydroorotate to orotate with quinone as electron acceptor. The polypeptide is Dihydroorotate dehydrogenase (quinone) (Aliivibrio salmonicida (strain LFI1238) (Vibrio salmonicida (strain LFI1238))).